Here is a 490-residue protein sequence, read N- to C-terminus: Betaine aldehyde dehydrogenase (490 aa).

Asp-93 provides a ligand contact to K(+). Residue 150–152 (GAW) participates in NAD(+) binding. Residue Lys-162 is the Charge relay system of the active site. 176 to 179 (KPSE) contacts NAD(+). Residue Val-180 coordinates K(+). Residue 230-233 (GIAS) participates in NAD(+) binding. Leu-246 provides a ligand contact to K(+). Residue Glu-252 is the Proton acceptor of the active site. NAD(+) is bound by residues Gly-254, Cys-286, and Glu-387. The Nucleophile role is filled by Cys-286. Cys-286 carries the post-translational modification Cysteine sulfenic acid (-SOH). Residues Lys-457 and Gly-460 each contribute to the K(+) site. Glu-464 serves as the catalytic Charge relay system.

It belongs to the aldehyde dehydrogenase family. Dimer of dimers. It depends on K(+) as a cofactor.

The catalysed reaction is betaine aldehyde + NAD(+) + H2O = glycine betaine + NADH + 2 H(+). Its pathway is amine and polyamine biosynthesis; betaine biosynthesis via choline pathway; betaine from betaine aldehyde: step 1/1. Involved in the biosynthesis of the osmoprotectant glycine betaine. Catalyzes the irreversible oxidation of betaine aldehyde to the corresponding acid. The protein is Betaine aldehyde dehydrogenase of Yersinia pseudotuberculosis serotype I (strain IP32953).